Here is a 109-residue protein sequence, read N- to C-terminus: UPF0060 membrane protein RC1_3291 (109 aa).

The next 4 helical transmembrane spans lie at 4-24 (IATY…FWAW), 31-51 (PLWL…LTRI), 59-79 (AYAA…WLVE), and 88-108 (TLGT…PRGG).

It belongs to the UPF0060 family.

The protein localises to the cell inner membrane. In Rhodospirillum centenum (strain ATCC 51521 / SW), this protein is UPF0060 membrane protein RC1_3291.